Consider the following 892-residue polypeptide: Exo-beta-D-glucosaminidase (892 aa).

A signal peptide spans 1–18; it reads MLANAIAALLLGSGIASA. A propeptide spanning residues 19-28 is cleaved from the precursor; the sequence is AGHGSPLTSK. N-linked (GlcNAc...) asparagine glycans are attached at residues Asn196, Asn336, and Asn440. Catalysis depends on Asp464, which acts as the Proton donor. Glu539 functions as the Nucleophile in the catalytic mechanism. N-linked (GlcNAc...) asparagine glycosylation is found at Asn557, Asn578, Asn689, and Asn825.

The protein belongs to the glycosyl hydrolase 2 family. Monomer.

It is found in the secreted. The protein resides in the extracellular space. The enzyme catalyses Hydrolysis of chitosan or chitosan oligosaccharides to remove successive D-glucosamine residues from the non-reducing termini.. In terms of biological role, hydrolyzes chitosan and chitooligosaccharides with retention of anomeric configuration. Has no activity against beta-D-galactoside, beta-D-glucuronide, beta-D-mannoside, chitin, glycol chitosan, cellulose, N,N'-diacetylchitibiose and pNP-GlcNAc. The protein is Exo-beta-D-glucosaminidase of Hypocrea jecorina (Trichoderma reesei).